A 299-amino-acid chain; its full sequence is ATP synthase gamma chain (299 aa).

It belongs to the ATPase gamma chain family. As to quaternary structure, F-type ATPases have 2 components, CF(1) - the catalytic core - and CF(0) - the membrane proton channel. CF(1) has five subunits: alpha(3), beta(3), gamma(1), delta(1), epsilon(1). CF(0) has three main subunits: a, b and c.

The protein localises to the cell inner membrane. Functionally, produces ATP from ADP in the presence of a proton gradient across the membrane. The gamma chain is believed to be important in regulating ATPase activity and the flow of protons through the CF(0) complex. This Rhodospirillum rubrum protein is ATP synthase gamma chain.